Reading from the N-terminus, the 1094-residue chain is Isoleucine--tRNA ligase (1094 aa).

The 'HIGH' region signature appears at 53 to 63; the sequence is PFANGLPHYGH. Residues 624–628 carry the 'KMSKS' region motif; sequence KLSKR. An ATP-binding site is contributed by Lys627.

Belongs to the class-I aminoacyl-tRNA synthetase family. IleS type 2 subfamily. Monomer. It depends on Zn(2+) as a cofactor.

It localises to the cytoplasm. The enzyme catalyses tRNA(Ile) + L-isoleucine + ATP = L-isoleucyl-tRNA(Ile) + AMP + diphosphate. Catalyzes the attachment of isoleucine to tRNA(Ile). As IleRS can inadvertently accommodate and process structurally similar amino acids such as valine, to avoid such errors it has two additional distinct tRNA(Ile)-dependent editing activities. One activity is designated as 'pretransfer' editing and involves the hydrolysis of activated Val-AMP. The other activity is designated 'posttransfer' editing and involves deacylation of mischarged Val-tRNA(Ile). The polypeptide is Isoleucine--tRNA ligase (Rickettsia felis (strain ATCC VR-1525 / URRWXCal2) (Rickettsia azadi)).